Here is a 206-residue protein sequence, read N- to C-terminus: 2,3-bisphosphoglycerate-dependent phosphoglycerate mutase (206 aa).

Substrate contacts are provided by residues 9–16, 22–23, Arg-61, 88–91, Lys-99, 115–116, and 159–160; these read RHGQSEWN, TG, ERDY, RR, and GN. Catalysis depends on His-10, which acts as the Tele-phosphohistidine intermediate. The active-site Proton donor/acceptor is Glu-88.

It belongs to the phosphoglycerate mutase family. BPG-dependent PGAM subfamily. In terms of assembly, homodimer.

It catalyses the reaction (2R)-2-phosphoglycerate = (2R)-3-phosphoglycerate. It participates in carbohydrate degradation; glycolysis; pyruvate from D-glyceraldehyde 3-phosphate: step 3/5. Functionally, catalyzes the interconversion of 2-phosphoglycerate and 3-phosphoglycerate. This Methylocella silvestris (strain DSM 15510 / CIP 108128 / LMG 27833 / NCIMB 13906 / BL2) protein is 2,3-bisphosphoglycerate-dependent phosphoglycerate mutase.